A 300-amino-acid chain; its full sequence is MNTLVLKIDAILSKHLKKQLAPYTISSQNTYVAFAAKKNGVTVLLYKSGKLVLQGNGANALAQELNLPVAKTVFEASNNSQDIPIIGSDEVGNGSYFGGIAVVASFVDPKDHSFLKKLGVDDSKKLSDKTIQQIAPLLEKQIPHQSLLLSPKKYNELVGKSKPYNAISIKVALHNQAIFLLLQKGIQPKQIVIDAFTSQSNYEKHLKKEKNHFPNPLTFQEKAESHYLAVAVSSIIARNLFLDNLDQLGQDLGYQLPSGAGSASDKVASQLLAAYGMSSLEYSAKLHFANTHKAQALLTK.

One can recognise an RNase H type-2 domain in the interval I83–K300. Residues D89, E90, and D194 each contribute to the a divalent metal cation site.

This sequence belongs to the RNase HII family. RnhC subfamily. Mn(2+) serves as cofactor. The cofactor is Mg(2+).

The protein localises to the cytoplasm. It catalyses the reaction Endonucleolytic cleavage to 5'-phosphomonoester.. Its function is as follows. Endonuclease that specifically degrades the RNA of RNA-DNA hybrids. This is Ribonuclease HIII from Streptococcus pyogenes serotype M1.